We begin with the raw amino-acid sequence, 136 residues long: Small ribosomal subunit protein uS12 (136 aa).

Asp89 carries the post-translational modification 3-methylthioaspartic acid. The disordered stretch occupies residues 104–136; sequence TAGVNGRTQRRSKYGAKRPKPGQAAAAAKGKKK. Over residues 111–123 the composition is skewed to basic residues; it reads TQRRSKYGAKRPK. Low complexity predominate over residues 124–136; the sequence is PGQAAAAAKGKKK.

It belongs to the universal ribosomal protein uS12 family. In terms of assembly, part of the 30S ribosomal subunit. Contacts proteins S8 and S17. May interact with IF1 in the 30S initiation complex.

Its function is as follows. With S4 and S5 plays an important role in translational accuracy. Interacts with and stabilizes bases of the 16S rRNA that are involved in tRNA selection in the A site and with the mRNA backbone. Located at the interface of the 30S and 50S subunits, it traverses the body of the 30S subunit contacting proteins on the other side and probably holding the rRNA structure together. The combined cluster of proteins S8, S12 and S17 appears to hold together the shoulder and platform of the 30S subunit. The polypeptide is Small ribosomal subunit protein uS12 (Parabacteroides distasonis (strain ATCC 8503 / DSM 20701 / CIP 104284 / JCM 5825 / NCTC 11152)).